We begin with the raw amino-acid sequence, 1450 residues long: M-protein, striated muscle (1450 aa).

The tract at residues 66–87 (AHEAMQESRKRTHEQKSHASDE) is disordered. 2 Ig-like C2-type domains span residues 142 to 233 (PEIL…CAVV) and 254 to 359 (PLSY…AFLF). 5 consecutive Fibronectin type-III domains span residues 373–468 (APMD…ALDP), 501–596 (PPTN…PQDI), 602–695 (APGR…VQAA), 698–800 (CPSY…TMPE), and 803–900 (PAYD…ASPG). 5 consecutive Ig-like C2-type domains span residues 899-995 (PGTK…LMTL), 1002-1115 (PTIP…FLRK), 1118-1204 (PHFS…LELS), 1225-1322 (PLKI…QRLK), and 1333-1422 (KVIG…VTVS).

As to expression, expressed in pectoralis and cardiac muscle.

In terms of biological role, is a structural constituent of myofibrillar M-band in striated muscle. The protein is M-protein, striated muscle of Gallus gallus (Chicken).